The following is a 476-amino-acid chain: Glutamyl-tRNA(Gln) amidotransferase subunit A (476 aa).

Residues lysine 70 and serine 145 each act as charge relay system in the active site. The active-site Acyl-ester intermediate is the serine 169.

Belongs to the amidase family. GatA subfamily. Heterotrimer of A, B and C subunits.

It carries out the reaction L-glutamyl-tRNA(Gln) + L-glutamine + ATP + H2O = L-glutaminyl-tRNA(Gln) + L-glutamate + ADP + phosphate + H(+). Functionally, allows the formation of correctly charged Gln-tRNA(Gln) through the transamidation of misacylated Glu-tRNA(Gln) in organisms which lack glutaminyl-tRNA synthetase. The reaction takes place in the presence of glutamine and ATP through an activated gamma-phospho-Glu-tRNA(Gln). This chain is Glutamyl-tRNA(Gln) amidotransferase subunit A, found in Methanosarcina acetivorans (strain ATCC 35395 / DSM 2834 / JCM 12185 / C2A).